The sequence spans 500 residues: MEFTIKTATPEKVRTGVLVVGLFADGILPPAAHAVDKASKGKLAQLVKRGDLDEKAGAAVMLHDLAGIAAERVLVVSLGKSAEFSDKAYRDALNSVAKALASGVAKVAAVAIADAELDGRTLAWRLQQATRQIADGAYRFDAPKAGAKDAKKERGARKITLLIGDKVSDELEAAVRRGQAVAEGMALAKDLGNLPGNVCTPAYLADTAEALGKQFKFDVEVLERADMEKLGMGSLLSVAKGSHIPPKFIVMHYKGGKSKAKPVVLVGKGITFDTGGISLKPGAEMDEMKYDMCGAASVLGTFKAIARMALPLNVVGIVPATENMPGGNATRPGDVVTSMSGQTIEILNTDAEGRLILCDALTYAERFKPACVIDIATLTGACVVALGKIPSGLLANDDDLAAELLKRGTESGDRAWQLPLWDEYQDLLKSNFADMANIGGRYGGTITAACFLARFTKAYKWAHLDIAGTAWVSGDAKGATGRPVPLLAEFLVGRAAAKAD.

The Mn(2+) site is built by K268 and D273. K280 is a catalytic residue. Positions 291, 350, and 352 each coordinate Mn(2+). R354 is an active-site residue.

The protein belongs to the peptidase M17 family. The cofactor is Mn(2+).

Its subcellular location is the cytoplasm. The catalysed reaction is Release of an N-terminal amino acid, Xaa-|-Yaa-, in which Xaa is preferably Leu, but may be other amino acids including Pro although not Arg or Lys, and Yaa may be Pro. Amino acid amides and methyl esters are also readily hydrolyzed, but rates on arylamides are exceedingly low.. It catalyses the reaction Release of an N-terminal amino acid, preferentially leucine, but not glutamic or aspartic acids.. Presumably involved in the processing and regular turnover of intracellular proteins. Catalyzes the removal of unsubstituted N-terminal amino acids from various peptides. This is Probable cytosol aminopeptidase from Azoarcus sp. (strain BH72).